A 128-amino-acid chain; its full sequence is Adrenodoxin homolog (128 aa).

One can recognise a 2Fe-2S ferredoxin-type domain in the interval 12-115; it reads EQIRIFFKTM…NAVFTVPRAT (104 aa). Residues C50, C56, C59, and C96 each contribute to the [2Fe-2S] cluster site.

It belongs to the adrenodoxin/putidaredoxin family. [2Fe-2S] cluster serves as cofactor.

The protein resides in the mitosome. Ferredoxins are iron-sulfur proteins that transfer electrons in a wide variety of metabolic reactions. The sequence is that of Adrenodoxin homolog from Encephalitozoon cuniculi (strain GB-M1) (Microsporidian parasite).